The sequence spans 214 residues: ATP phosphoribosyltransferase (214 aa).

The protein belongs to the ATP phosphoribosyltransferase family. Short subfamily. As to quaternary structure, heteromultimer composed of HisG and HisZ subunits.

It localises to the cytoplasm. The catalysed reaction is 1-(5-phospho-beta-D-ribosyl)-ATP + diphosphate = 5-phospho-alpha-D-ribose 1-diphosphate + ATP. It participates in amino-acid biosynthesis; L-histidine biosynthesis; L-histidine from 5-phospho-alpha-D-ribose 1-diphosphate: step 1/9. Functionally, catalyzes the condensation of ATP and 5-phosphoribose 1-diphosphate to form N'-(5'-phosphoribosyl)-ATP (PR-ATP). Has a crucial role in the pathway because the rate of histidine biosynthesis seems to be controlled primarily by regulation of HisG enzymatic activity. The chain is ATP phosphoribosyltransferase from Marinomonas sp. (strain MWYL1).